The chain runs to 204 residues: Holliday junction branch migration complex subunit RuvA (204 aa).

The segment at 1-63 is domain I; the sequence is MIGWLQGRVL…EDGQFLYGFS (63 aa). The segment at 64–142 is domain II; that stretch reads SFLQRQLFRE…KNDLFLCDES (79 aa). Residues 143 to 152 are flexible linker; sequence ESSRAPIALS. The segment at 152 to 204 is domain III; the sequence is SASEEAIQALIALELAPAEAELWVKKAQKTLAEDADSAALIKTAFALRLQGAK.

The protein belongs to the RuvA family. As to quaternary structure, homotetramer. Forms an RuvA(8)-RuvB(12)-Holliday junction (HJ) complex. HJ DNA is sandwiched between 2 RuvA tetramers; dsDNA enters through RuvA and exits via RuvB. An RuvB hexamer assembles on each DNA strand where it exits the tetramer. Each RuvB hexamer is contacted by two RuvA subunits (via domain III) on 2 adjacent RuvB subunits; this complex drives branch migration. In the full resolvosome a probable DNA-RuvA(4)-RuvB(12)-RuvC(2) complex forms which resolves the HJ.

The protein resides in the cytoplasm. Functionally, the RuvA-RuvB-RuvC complex processes Holliday junction (HJ) DNA during genetic recombination and DNA repair, while the RuvA-RuvB complex plays an important role in the rescue of blocked DNA replication forks via replication fork reversal (RFR). RuvA specifically binds to HJ cruciform DNA, conferring on it an open structure. The RuvB hexamer acts as an ATP-dependent pump, pulling dsDNA into and through the RuvAB complex. HJ branch migration allows RuvC to scan DNA until it finds its consensus sequence, where it cleaves and resolves the cruciform DNA. This chain is Holliday junction branch migration complex subunit RuvA, found in Dichelobacter nodosus (strain VCS1703A).